The sequence spans 1619 residues: ATP-dependent helicase ULS1 (1619 aa).

Residues 7 to 10 (IDLT) carry the SUMO interacting motif; type a 1 motif. The span at 86-102 (STFNNEKSSNEVKQQQV) shows a compositional bias: polar residues. Disordered regions lie at residues 86–123 (STFN…SSPS), 200–279 (NNKP…VESS), 347–371 (PILP…NSSI), and 429–450 (SGSN…SVLQ). The segment covering 103–118 (LKEETMGSSNDEKKTQ) has biased composition (basic and acidic residues). Phosphoserine is present on Ser121. Residues 200–210 (NNKPSQQQFSD) show a composition bias toward polar residues. Positions 211-226 (PETKDNSLKSENKDQI) are enriched in basic and acidic residues. Composition is skewed to polar residues over residues 242-259 (SAFQ…TIPN) and 269-279 (LPSNLSSVESS). Positions 353 to 366 (NMDHTTHNSHDSEQ) are enriched in basic and acidic residues. The SUMO interacting motif; type b 1 signature appears at 371 to 378 (IIILSDED). An SUMO interacting motif; type a 2 motif is present at residues 470 to 473 (LDTL). The SUMO interacting motif; type b 2 signature appears at 543–550 (ILVDEAEN). A Helicase ATP-binding domain is found at 956–1157 (QVENSAKKGG…YSLIRFLRIP (202 aa)). 969 to 976 (DDMGLGKT) serves as a coordination point for ATP. The RING-type zinc-finger motif lies at 1330 to 1386 (CFWCMEQLEPEAMSVLTGCGHLICDTCIEPFIEESSMLPQAKKTKGGAFAIPCKDCQ). The region spanning 1447–1606 (QCIQVIQRVF…GKIKEVNSLG (160 aa)) is the Helicase C-terminal domain.

The protein belongs to the SNF2/RAD54 helicase family. Interacts with CDC3, CDC11, EBP2, SIR4, UBC4 and SUMO/SMT3.

The protein resides in the nucleus. ATP-dependent helicase involved mating type switching and in silencing interference through its interaction with the silencing regulator SIR4. Cooperates with UBC4 and UBC5 to mediate ubiquitination of SUMO conjugates. The polypeptide is ATP-dependent helicase ULS1 (ULS1) (Saccharomyces cerevisiae (strain ATCC 204508 / S288c) (Baker's yeast)).